The sequence spans 336 residues: tRNA N6-adenosine threonylcarbamoyltransferase (336 aa).

Fe cation is bound by residues His-114 and His-118. Residues 136–140 (LVSGG), Asp-169, Gly-182, Asp-186, and Asn-275 each bind substrate. Asp-301 serves as a coordination point for Fe cation.

It belongs to the KAE1 / TsaD family. Requires Fe(2+) as cofactor.

It is found in the cytoplasm. The enzyme catalyses L-threonylcarbamoyladenylate + adenosine(37) in tRNA = N(6)-L-threonylcarbamoyladenosine(37) in tRNA + AMP + H(+). In terms of biological role, required for the formation of a threonylcarbamoyl group on adenosine at position 37 (t(6)A37) in tRNAs that read codons beginning with adenine. Is involved in the transfer of the threonylcarbamoyl moiety of threonylcarbamoyl-AMP (TC-AMP) to the N6 group of A37, together with TsaE and TsaB. TsaD likely plays a direct catalytic role in this reaction. The sequence is that of tRNA N6-adenosine threonylcarbamoyltransferase from Streptococcus sanguinis (strain SK36).